Reading from the N-terminus, the 494-residue chain is Aspartyl/glutamyl-tRNA(Asn/Gln) amidotransferase subunit B (494 aa).

Belongs to the GatB/GatE family. GatB subfamily. As to quaternary structure, heterotrimer of A, B and C subunits.

It carries out the reaction L-glutamyl-tRNA(Gln) + L-glutamine + ATP + H2O = L-glutaminyl-tRNA(Gln) + L-glutamate + ADP + phosphate + H(+). It catalyses the reaction L-aspartyl-tRNA(Asn) + L-glutamine + ATP + H2O = L-asparaginyl-tRNA(Asn) + L-glutamate + ADP + phosphate + 2 H(+). Functionally, allows the formation of correctly charged Asn-tRNA(Asn) or Gln-tRNA(Gln) through the transamidation of misacylated Asp-tRNA(Asn) or Glu-tRNA(Gln) in organisms which lack either or both of asparaginyl-tRNA or glutaminyl-tRNA synthetases. The reaction takes place in the presence of glutamine and ATP through an activated phospho-Asp-tRNA(Asn) or phospho-Glu-tRNA(Gln). This Synechococcus sp. (strain CC9605) protein is Aspartyl/glutamyl-tRNA(Asn/Gln) amidotransferase subunit B.